A 414-amino-acid polypeptide reads, in one-letter code: 2,3-diketo-5-methylthiopentyl-1-phosphate enolase (414 aa).

Catalysis depends on K99, which acts as the Proton acceptor. Substrate-binding positions include K148, K174 to E177, H265, G338, and G360 to G361. K174, D176, and E177 together coordinate Mg(2+). K174 is subject to N6-carboxylysine.

Belongs to the RuBisCO large chain family. Type IV subfamily. In terms of assembly, homodimer. Requires Mg(2+) as cofactor.

The enzyme catalyses 5-methylsulfanyl-2,3-dioxopentyl phosphate = 2-hydroxy-5-methylsulfanyl-3-oxopent-1-enyl phosphate. The protein operates within amino-acid biosynthesis; L-methionine biosynthesis via salvage pathway; L-methionine from S-methyl-5-thio-alpha-D-ribose 1-phosphate: step 3/6. Catalyzes the enolization of 2,3-diketo-5-methylthiopentyl-1-phosphate (DK-MTP-1-P) into 2-hydroxy-3-keto-5-methylthiopentenyl-1-phosphate (HK-MTPenyl-1-P). The chain is 2,3-diketo-5-methylthiopentyl-1-phosphate enolase from Bacillus anthracis (strain CDC 684 / NRRL 3495).